The following is a 376-amino-acid chain: Histidinol-phosphate aminotransferase (376 aa).

Lysine 230 bears the N6-(pyridoxal phosphate)lysine mark.

The protein belongs to the class-II pyridoxal-phosphate-dependent aminotransferase family. Histidinol-phosphate aminotransferase subfamily. In terms of assembly, homodimer. Pyridoxal 5'-phosphate is required as a cofactor.

The enzyme catalyses L-histidinol phosphate + 2-oxoglutarate = 3-(imidazol-4-yl)-2-oxopropyl phosphate + L-glutamate. Its pathway is amino-acid biosynthesis; L-histidine biosynthesis; L-histidine from 5-phospho-alpha-D-ribose 1-diphosphate: step 7/9. The chain is Histidinol-phosphate aminotransferase from Trichodesmium erythraeum (strain IMS101).